The chain runs to 453 residues: Probable glycine dehydrogenase (decarboxylating) subunit 1 (453 aa).

It belongs to the GcvP family. N-terminal subunit subfamily. In terms of assembly, the glycine cleavage system is composed of four proteins: P, T, L and H. In this organism, the P 'protein' is a heterodimer of two subunits.

It catalyses the reaction N(6)-[(R)-lipoyl]-L-lysyl-[glycine-cleavage complex H protein] + glycine + H(+) = N(6)-[(R)-S(8)-aminomethyldihydrolipoyl]-L-lysyl-[glycine-cleavage complex H protein] + CO2. Its function is as follows. The glycine cleavage system catalyzes the degradation of glycine. The P protein binds the alpha-amino group of glycine through its pyridoxal phosphate cofactor; CO(2) is released and the remaining methylamine moiety is then transferred to the lipoamide cofactor of the H protein. The protein is Probable glycine dehydrogenase (decarboxylating) subunit 1 of Nitrosomonas europaea (strain ATCC 19718 / CIP 103999 / KCTC 2705 / NBRC 14298).